Here is a 545-residue protein sequence, read N- to C-terminus: CTP synthase (545 aa).

The tract at residues 1-266 (MTTNYIFVTG…DDLVCARFGI (266 aa)) is amidoligase domain. Residue serine 14 coordinates CTP. Serine 14 contacts UTP. Residues 15-20 (SLGKGI) and aspartate 72 each bind ATP. Residues aspartate 72 and glutamate 140 each contribute to the Mg(2+) site. Residues 147 to 149 (DIE), 187 to 192 (KTKPTQ), and lysine 223 each bind CTP. Residues 187–192 (KTKPTQ) and lysine 223 each bind UTP. 239 to 241 (KDV) is a binding site for ATP. A Glutamine amidotransferase type-1 domain is found at 291–542 (TIGMVGKYTE…VKAAGQFQRG (252 aa)). Glycine 352 serves as a coordination point for L-glutamine. Cysteine 379 functions as the Nucleophile; for glutamine hydrolysis in the catalytic mechanism. L-glutamine-binding positions include 380–383 (LGMQ), glutamate 403, and arginine 470. Active-site residues include histidine 515 and glutamate 517.

It belongs to the CTP synthase family. As to quaternary structure, homotetramer.

The catalysed reaction is UTP + L-glutamine + ATP + H2O = CTP + L-glutamate + ADP + phosphate + 2 H(+). It catalyses the reaction L-glutamine + H2O = L-glutamate + NH4(+). It carries out the reaction UTP + NH4(+) + ATP = CTP + ADP + phosphate + 2 H(+). Its pathway is pyrimidine metabolism; CTP biosynthesis via de novo pathway; CTP from UDP: step 2/2. Its activity is regulated as follows. Allosterically activated by GTP, when glutamine is the substrate; GTP has no effect on the reaction when ammonia is the substrate. The allosteric effector GTP functions by stabilizing the protein conformation that binds the tetrahedral intermediate(s) formed during glutamine hydrolysis. Inhibited by the product CTP, via allosteric rather than competitive inhibition. Its function is as follows. Catalyzes the ATP-dependent amination of UTP to CTP with either L-glutamine or ammonia as the source of nitrogen. Regulates intracellular CTP levels through interactions with the four ribonucleotide triphosphates. The protein is CTP synthase of Vibrio cholerae serotype O1 (strain ATCC 39541 / Classical Ogawa 395 / O395).